Consider the following 101-residue polypeptide: Small ribosomal subunit protein uS10 (101 aa).

It belongs to the universal ribosomal protein uS10 family. As to quaternary structure, part of the 30S ribosomal subunit.

Involved in the binding of tRNA to the ribosomes. The polypeptide is Small ribosomal subunit protein uS10 (Phocaeicola vulgatus (strain ATCC 8482 / DSM 1447 / JCM 5826 / CCUG 4940 / NBRC 14291 / NCTC 11154) (Bacteroides vulgatus)).